We begin with the raw amino-acid sequence, 428 residues long: Probable pectin lyase F (428 aa).

Positions 1–20 (MVLLHPLLTAAALLGASARA) are cleaved as a signal peptide. A disulfide bond links Cys-83 and Cys-107. Arg-257 is a catalytic residue. An N-linked (GlcNAc...) asparagine glycan is attached at Asn-276. The cysteines at positions 324 and 332 are disulfide-linked. 2 disordered regions span residues 337 to 367 (LTSS…MTTD) and 383 to 428 (GSGG…HHHY). Over residues 389–417 (AASSSASITPSPTSSAIPSSSATPSSSAY) the composition is skewed to low complexity. A compositionally biased stretch (basic residues) spans 418–428 (ARRHYARHHHY).

The protein belongs to the polysaccharide lyase 1 family.

It localises to the secreted. The enzyme catalyses Eliminative cleavage of (1-&gt;4)-alpha-D-galacturonan methyl ester to give oligosaccharides with 4-deoxy-6-O-methyl-alpha-D-galact-4-enuronosyl groups at their non-reducing ends.. Pectinolytic enzymes consist of four classes of enzymes: pectin lyase, polygalacturonase, pectin methylesterase and rhamnogalacturonase. Among pectinolytic enzymes, pectin lyase is the most important in depolymerization of pectin, since it cleaves internal glycosidic bonds of highly methylated pectins. The protein is Probable pectin lyase F (pelF) of Aspergillus flavus (strain ATCC 200026 / FGSC A1120 / IAM 13836 / NRRL 3357 / JCM 12722 / SRRC 167).